The primary structure comprises 109 residues: B melanoma antigen 3 (109 aa).

The N-terminal stretch at 1 to 17 is a signal peptide; that stretch reads MAAGVVFLALSAQLLQA.

This sequence belongs to the BAGE family. In terms of tissue distribution, not expressed in normal tissues except in testis. Expressed in melanoma, bladder and lung carcinomas.

The protein localises to the secreted. Functionally, unknown. Candidate gene encoding tumor antigens. This Homo sapiens (Human) protein is B melanoma antigen 3 (BAGE3).